The chain runs to 372 residues: Protein RecA (372 aa).

ATP is bound at residue 66-73 (GPESSGKT). Residues 328-359 (GVGVRPEEPTATESGPDAATAESAPAVPAPAT) form a disordered region. The span at 345–359 (AATAESAPAVPAPAT) shows a compositional bias: low complexity.

Belongs to the RecA family.

It is found in the cytoplasm. In terms of biological role, can catalyze the hydrolysis of ATP in the presence of single-stranded DNA, the ATP-dependent uptake of single-stranded DNA by duplex DNA, and the ATP-dependent hybridization of homologous single-stranded DNAs. It interacts with LexA causing its activation and leading to its autocatalytic cleavage. This is Protein RecA from Streptomyces ambofaciens.